We begin with the raw amino-acid sequence, 504 residues long: L-carnitine/gamma-butyrobetaine antiporter (504 aa).

The next 12 helical transmembrane spans lie at 10–30, 51–71, 92–112, 143–163, 195–215, 231–251, 263–283, 316–336, 347–367, 403–423, 446–466, and 475–495; these read IEPK…WLTV, WGWA…WLVF, IFMM…SIEI, GPLP…FFFV, FYLV…TPLV, LDAI…ACGL, SYLS…SFIM, WTVF…IFLA, LCFG…TVLG, LSTA…VTLI, LLVR…LLAL, and AIIA…LSFI.

It belongs to the BCCT transporter (TC 2.A.15) family. CaiT subfamily. In terms of assembly, homotrimer.

It localises to the cell inner membrane. It catalyses the reaction 4-(trimethylamino)butanoate(in) + (R)-carnitine(out) = 4-(trimethylamino)butanoate(out) + (R)-carnitine(in). Its pathway is amine and polyamine metabolism; carnitine metabolism. Catalyzes the exchange of L-carnitine for gamma-butyrobetaine. This is L-carnitine/gamma-butyrobetaine antiporter from Escherichia fergusonii (strain ATCC 35469 / DSM 13698 / CCUG 18766 / IAM 14443 / JCM 21226 / LMG 7866 / NBRC 102419 / NCTC 12128 / CDC 0568-73).